The sequence spans 313 residues: Ornithine carbamoyltransferase (313 aa).

Carbamoyl phosphate is bound by residues 61-64 (STRT), Q88, R112, and 139-142 (HPCQ). L-ornithine-binding positions include N170, D228, and 232-233 (SM). Residues 268–269 (CL) and R296 contribute to the carbamoyl phosphate site.

This sequence belongs to the aspartate/ornithine carbamoyltransferase superfamily. OTCase family.

Its subcellular location is the cytoplasm. The enzyme catalyses carbamoyl phosphate + L-ornithine = L-citrulline + phosphate + H(+). Its pathway is amino-acid biosynthesis; L-arginine biosynthesis; L-arginine from L-ornithine and carbamoyl phosphate: step 1/3. Functionally, reversibly catalyzes the transfer of the carbamoyl group from carbamoyl phosphate (CP) to the N(epsilon) atom of ornithine (ORN) to produce L-citrulline. The sequence is that of Ornithine carbamoyltransferase from Bordetella avium (strain 197N).